The sequence spans 172 residues: Translation initiation factor IF-3 (172 aa).

This sequence belongs to the IF-3 family. As to quaternary structure, monomer.

It is found in the cytoplasm. IF-3 binds to the 30S ribosomal subunit and shifts the equilibrium between 70S ribosomes and their 50S and 30S subunits in favor of the free subunits, thus enhancing the availability of 30S subunits on which protein synthesis initiation begins. This chain is Translation initiation factor IF-3, found in Campylobacter jejuni subsp. doylei (strain ATCC BAA-1458 / RM4099 / 269.97).